A 275-amino-acid polypeptide reads, in one-letter code: 2-dehydro-3-deoxyphosphooctonate aldolase (275 aa).

The protein belongs to the KdsA family.

The protein resides in the cytoplasm. The enzyme catalyses D-arabinose 5-phosphate + phosphoenolpyruvate + H2O = 3-deoxy-alpha-D-manno-2-octulosonate-8-phosphate + phosphate. It participates in carbohydrate biosynthesis; 3-deoxy-D-manno-octulosonate biosynthesis; 3-deoxy-D-manno-octulosonate from D-ribulose 5-phosphate: step 2/3. The protein operates within bacterial outer membrane biogenesis; lipopolysaccharide biosynthesis. In Protochlamydia amoebophila (strain UWE25), this protein is 2-dehydro-3-deoxyphosphooctonate aldolase.